A 55-amino-acid polypeptide reads, in one-letter code: Photosystem II reaction center X protein (55 aa).

A helical membrane pass occupies residues 24 to 44 (IGSFLAAAALIVVPAASFLLW).

Belongs to the PsbX family. Type 2 subfamily. In terms of assembly, PSII consists of a core antenna complex that captures photons, and an electron transfer chain that converts photonic excitation into a charge separation. PSII forms dimeric complexes.

Its subcellular location is the cellular thylakoid membrane. Involved in the binding and/or turnover of quinones at the Q(B) site of Photosystem II. In Prochlorococcus marinus (strain SARG / CCMP1375 / SS120), this protein is Photosystem II reaction center X protein.